The sequence spans 1222 residues: ATP-dependent helicase/nuclease subunit A (1222 aa).

A UvrD-like helicase ATP-binding domain is found at glutamine 39–glutamine 495. ATP is bound at residue alanine 60–threonine 67. The UvrD-like helicase C-terminal domain occupies glutamine 524–glycine 810.

Belongs to the helicase family. AddA subfamily. In terms of assembly, heterodimer of AddA and AddB/RexB. Mg(2+) is required as a cofactor.

It carries out the reaction Couples ATP hydrolysis with the unwinding of duplex DNA by translocating in the 3'-5' direction.. The catalysed reaction is ATP + H2O = ADP + phosphate + H(+). Its function is as follows. The heterodimer acts as both an ATP-dependent DNA helicase and an ATP-dependent, dual-direction single-stranded exonuclease. Recognizes the chi site generating a DNA molecule suitable for the initiation of homologous recombination. The AddA nuclease domain is required for chi fragment generation; this subunit has the helicase and 3' -&gt; 5' nuclease activities. The protein is ATP-dependent helicase/nuclease subunit A of Streptococcus pyogenes serotype M6 (strain ATCC BAA-946 / MGAS10394).